Here is a 125-residue protein sequence, read N- to C-terminus: Lymphocyte antigen 6 complex locus protein G6c (125 aa).

An N-terminal signal peptide occupies residues 1-18 (MKALMLLTLSVLLCWVSA). Residues 20–111 (IRCHSCYKVP…PRPTPALGLV (92 aa)) enclose the UPAR/Ly6 domain. 3 disulfide bridges follow: Cys-22–Cys-47, Cys-25–Cys-33, and Cys-39–Cys-65. Asn-88 is a glycosylation site (N-linked (GlcNAc...) asparagine). Cysteines 92 and 97 form a disulfide. A lipid anchor (GPI-anchor amidated serine) is attached at Ser-99. A propeptide spans 100-125 (AGPRPTPALGLVFLTSLAGLGLWLLH) (removed in mature form).

In terms of assembly, monomer. In terms of processing, N-glycosylated. As to expression, highly expressed at the leading edges of cells, on filopodia.

The protein localises to the cell membrane. This chain is Lymphocyte antigen 6 complex locus protein G6c (LY6G6C), found in Homo sapiens (Human).